The chain runs to 105 residues: Probable molt-inhibiting hormone (105 aa).

The N-terminal stretch at 1-28 (MYRMPMRFWLTAVVMVVVGALLLDTASA) is a signal peptide. 3 cysteine pairs are disulfide-bonded: cysteine 35/cysteine 72, cysteine 52/cysteine 68, and cysteine 55/cysteine 81.

Belongs to the arthropod CHH/MIH/GIH/VIH hormone family. Expressed in the postmolt, intermolt, and premolt stages of the shrimp eyestalks and the brain.

It is found in the secreted. In terms of biological role, inhibits Y-organs where molting hormone (ecdysteroid) is secreted. A molting cycle is initiated when MIH secretion diminishes or stops. The sequence is that of Probable molt-inhibiting hormone from Metapenaeus ensis (Greasyback shrimp).